Here is a 303-residue protein sequence, read N- to C-terminus: 4-diphosphocytidyl-2-C-methyl-D-erythritol kinase (303 aa).

Residue K24 is part of the active site. Position 111 to 121 (111 to 121 (PIASGIGGGSA)) interacts with ATP. D153 is a catalytic residue.

The protein belongs to the GHMP kinase family. IspE subfamily.

The enzyme catalyses 4-CDP-2-C-methyl-D-erythritol + ATP = 4-CDP-2-C-methyl-D-erythritol 2-phosphate + ADP + H(+). It functions in the pathway isoprenoid biosynthesis; isopentenyl diphosphate biosynthesis via DXP pathway; isopentenyl diphosphate from 1-deoxy-D-xylulose 5-phosphate: step 3/6. Its function is as follows. Catalyzes the phosphorylation of the position 2 hydroxy group of 4-diphosphocytidyl-2C-methyl-D-erythritol. The protein is 4-diphosphocytidyl-2-C-methyl-D-erythritol kinase of Rhizobium johnstonii (strain DSM 114642 / LMG 32736 / 3841) (Rhizobium leguminosarum bv. viciae).